The primary structure comprises 339 residues: Large ribosomal subunit protein uL10 (339 aa).

Positions 307–339 (VEEEKKEEKVEEEKEDEEASEEEALAGLSALFG) are disordered. Residues 308–318 (EEEKKEEKVEE) are compositionally biased toward basic and acidic residues. Positions 319 to 330 (EKEDEEASEEEA) are enriched in acidic residues.

The protein belongs to the universal ribosomal protein uL10 family. Part of the 50S ribosomal subunit. Forms part of the ribosomal stalk which helps the ribosome interact with GTP-bound translation factors. Forms a heptameric L10(L12)2(L12)2(L12)2 complex, where L10 forms an elongated spine to which the L12 dimers bind in a sequential fashion.

Its function is as follows. Forms part of the ribosomal stalk, playing a central role in the interaction of the ribosome with GTP-bound translation factors. The sequence is that of Large ribosomal subunit protein uL10 from Pyrococcus furiosus (strain ATCC 43587 / DSM 3638 / JCM 8422 / Vc1).